The following is a 78-amino-acid chain: uncharacterized protein (78 aa).

A helical transmembrane segment spans residues 13-33 (STILILLMSVLILLLSIDILA).

The protein resides in the membrane. This is an uncharacterized protein from Methanocaldococcus jannaschii (strain ATCC 43067 / DSM 2661 / JAL-1 / JCM 10045 / NBRC 100440) (Methanococcus jannaschii).